The sequence spans 151 residues: Endoribonuclease YbeY (151 aa).

Positions 113, 117, and 123 each coordinate Zn(2+).

Belongs to the endoribonuclease YbeY family. Zn(2+) serves as cofactor.

It localises to the cytoplasm. Its function is as follows. Single strand-specific metallo-endoribonuclease involved in late-stage 70S ribosome quality control and in maturation of the 3' terminus of the 16S rRNA. The polypeptide is Endoribonuclease YbeY (Polaromonas naphthalenivorans (strain CJ2)).